The sequence spans 239 residues: Transmembrane ascorbate ferrireductase 1 (239 aa).

At 1-7 the chain is on the cytoplasmic side; sequence MAVRINA. A helical membrane pass occupies residues 8–28; sequence MAVTFVAHALAVIAAIMVLVW. The region spanning 13 to 216 is the Cytochrome b561 domain; that stretch reads VAHALAVIAA…FGAFVVLTAS (204 aa). Residues 29 to 45 are Lumenal-facing; sequence SISYRGGLAWEATNKNL. The chain crosses the membrane as a helical span at residues 46–66; sequence IFNLHPVLMLIGFIILGGEAI. Heme b is bound at residue His50. The Cytoplasmic portion of the chain corresponds to 67 to 81; the sequence is ISYKSLPLEKPVKKL. The chain crosses the membrane as a helical span at residues 82 to 102; that stretch reads IHLILHAIALALGIFGICAAF. 2 residues coordinate heme b: His83 and His117. Topologically, residues 103-119 are lumenal; the sequence is KNHNESHIPNLYSLHSW. The chain crosses the membrane as a helical span at residues 120 to 140; it reads IGIGVISLYGFQWVYSFIVFF. The Cytoplasmic portion of the chain corresponds to 141 to 155; that stretch reads FPGGSTNLKSGLLPW. His156 contacts heme b. The chain crosses the membrane as a helical span at residues 156 to 176; the sequence is HAMLGLFVYILAVGNAALGFL. Residues 177-193 lie on the Lumenal side of the membrane; the sequence is EKLTFLENGGLDKYGSE. Residues 194–214 traverse the membrane as a helical segment; sequence AFLINFTAIITILFGAFVVLT. The Cytoplasmic portion of the chain corresponds to 215–239; that stretch reads ASAESPSPSPSVSNDDSVDFSYSAI. Positions 217–239 are disordered; that stretch reads AESPSPSPSVSNDDSVDFSYSAI. Positions 224–239 are enriched in low complexity; sequence PSVSNDDSVDFSYSAI.

As to quaternary structure, homodimer. It depends on heme b as a cofactor. As to expression, expressed in roots, seedlings and leaves. Lower expression in flowers. Expressed in the L1 layer of the shoot apex, in the epidermis of leaf primordia and young leaves and in vascular bundles. In the differentiation zone of the root, detected in the pericycle and in the epidermis, but not in the cortex. Strongly expressed in the lateral part of the root cap and in the epidermis of the root tip, but not in the meristematic tissue. Not expressed in lateral roots. In mature embryos, expressed in the epidermis, cotyledon tips and root tips.

The protein localises to the vacuole membrane. It catalyses the reaction Fe(3+)(out) + L-ascorbate(in) = monodehydro-L-ascorbate radical(in) + Fe(2+)(out) + H(+). Its function is as follows. Two-heme-containing cytochrome. Catalyzes ascorbate-dependent trans-membrane ferric-chelate reduction. Able to use dihydrolipoic acid (DHLA) as an alternative substrate to ascorbate. This Arabidopsis thaliana (Mouse-ear cress) protein is Transmembrane ascorbate ferrireductase 1 (CYB561A).